The sequence spans 88 residues: uncharacterized protein (88 aa).

Residues Met1–Ala25 form the signal peptide.

This is an uncharacterized protein from Escherichia coli O6:H1 (strain CFT073 / ATCC 700928 / UPEC).